Here is a 456-residue protein sequence, read N- to C-terminus: Bifunctional protein GlmU (456 aa).

The interval 1 to 229 (MLNNTMSVVI…ISETDGVNNR (229 aa)) is pyrophosphorylase. Residues 11-14 (LAAG), Lys-25, Gln-76, 81-82 (GT), 103-105 (YGD), Gly-140, Glu-154, Asn-169, and Asn-227 contribute to the UDP-N-acetyl-alpha-D-glucosamine site. Mg(2+) is bound at residue Asp-105. Asn-227 is a Mg(2+) binding site. The linker stretch occupies residues 230-250 (LQLSRLERIYQAEQAEKLLLA). Residues 251 to 456 (GVMLRDPARF…QGWQRPVKKK (206 aa)) form an N-acetyltransferase region. Positions 333 and 351 each coordinate UDP-N-acetyl-alpha-D-glucosamine. The active-site Proton acceptor is the His-363. UDP-N-acetyl-alpha-D-glucosamine contacts are provided by Tyr-366 and Asn-377. Acetyl-CoA contacts are provided by residues Ala-380, 386–387 (NY), Ser-405, Ala-423, and Arg-440.

In the N-terminal section; belongs to the N-acetylglucosamine-1-phosphate uridyltransferase family. It in the C-terminal section; belongs to the transferase hexapeptide repeat family. Homotrimer. Mg(2+) serves as cofactor.

It is found in the cytoplasm. It carries out the reaction alpha-D-glucosamine 1-phosphate + acetyl-CoA = N-acetyl-alpha-D-glucosamine 1-phosphate + CoA + H(+). The enzyme catalyses N-acetyl-alpha-D-glucosamine 1-phosphate + UTP + H(+) = UDP-N-acetyl-alpha-D-glucosamine + diphosphate. It participates in nucleotide-sugar biosynthesis; UDP-N-acetyl-alpha-D-glucosamine biosynthesis; N-acetyl-alpha-D-glucosamine 1-phosphate from alpha-D-glucosamine 6-phosphate (route II): step 2/2. Its pathway is nucleotide-sugar biosynthesis; UDP-N-acetyl-alpha-D-glucosamine biosynthesis; UDP-N-acetyl-alpha-D-glucosamine from N-acetyl-alpha-D-glucosamine 1-phosphate: step 1/1. The protein operates within bacterial outer membrane biogenesis; LPS lipid A biosynthesis. Its function is as follows. Catalyzes the last two sequential reactions in the de novo biosynthetic pathway for UDP-N-acetylglucosamine (UDP-GlcNAc). The C-terminal domain catalyzes the transfer of acetyl group from acetyl coenzyme A to glucosamine-1-phosphate (GlcN-1-P) to produce N-acetylglucosamine-1-phosphate (GlcNAc-1-P), which is converted into UDP-GlcNAc by the transfer of uridine 5-monophosphate (from uridine 5-triphosphate), a reaction catalyzed by the N-terminal domain. This Enterobacter sp. (strain 638) protein is Bifunctional protein GlmU.